Consider the following 286-residue polypeptide: MANLKEIRNRITSVSSTMQITSAMKMVSAAKLKKAQDAITAMRPYAEKLTELLQNLSATLDGDAGGEFTKQREIKKVLVVAITSNRGLCGAFNTNVIKEVKNRADFYAGKQVDVFAIGKKGNDVLSKTLSVIDNQSSVFDALTFDNVAKIAQMLTDKFVAGEYDRIEVIYNQFKNAATQIVQTEQFLPLAPIKSDLPVSTGDYIFEPSKEEIVLTLIPKSLKTQLYKGIRDSFASEHGARMTAMHKATDNATELRDQLKLTYNKARQAAITNEILEIVGGAEALKG.

It belongs to the ATPase gamma chain family. As to quaternary structure, F-type ATPases have 2 components, CF(1) - the catalytic core - and CF(0) - the membrane proton channel. CF(1) has five subunits: alpha(3), beta(3), gamma(1), delta(1), epsilon(1). CF(0) has three main subunits: a, b and c.

The protein resides in the cell inner membrane. Its function is as follows. Produces ATP from ADP in the presence of a proton gradient across the membrane. The gamma chain is believed to be important in regulating ATPase activity and the flow of protons through the CF(0) complex. In Flavobacterium psychrophilum (strain ATCC 49511 / DSM 21280 / CIP 103535 / JIP02/86), this protein is ATP synthase gamma chain.